Here is a 625-residue protein sequence, read N- to C-terminus: Mitochondrial Rho GTPase 1 (625 aa).

Residues 1 to 601 are Cytoplasmic-facing; that stretch reads MSDDETLADV…LRRVFYLNDS (601 aa). The 168-residue stretch at 3–170 folds into the Miro 1 domain; it reads DDETLADVRI…EIFYYAQKAV (168 aa). GTP contacts are provided by residues 16–23, 62–66, and 123–126; these read GDEGCGKT, DLSIK, and NKSD. 2 consecutive EF-hand domains span residues 188–223 and 308–343; these read RARKALIRVFKICDRDNDGYLSDTELNDFQKLCFGI and EGVQFVSALFEKYDEDKDGCLSPSELQNLFSVCPVP. Residues D201, D203, D205, Y207, E212, D321, D323, D325, C327, and E332 each contribute to the Ca(2+) site. The Miro 2 domain maps to 420 to 625; sequence HGTDRKVFQC…LAGFLVLKNL (206 aa). Residues 433-440, 470-474, and 537-540 each bind GTP; these read GAKDAGKT, RVKEE, and TKVE. Residues 602-622 form a helical; Anchor for type IV membrane protein membrane-spanning segment; it reads NLLSKITFGAAIVALAGFLVL. The Mitochondrial intermembrane portion of the chain corresponds to 623–625; that stretch reads KNL.

The protein belongs to the mitochondrial Rho GTPase family.

It localises to the mitochondrion outer membrane. Its function is as follows. Mitochondrial GTPase involved in mitochondrial trafficking. Probably involved in control of anterograde transport of mitochondria and their subcellular distribution. Plays a role in maintaining mitochondrial morphology. The protein is Mitochondrial Rho GTPase 1 of Caenorhabditis elegans.